A 352-amino-acid polypeptide reads, in one-letter code: C-C chemokine receptor type 5 (352 aa).

The Extracellular segment spans residues 1–30 (MDYQVSSPTYDIDYDTSEPCQKINVKQIAA). Tyrosine 3 bears the Sulfotyrosine mark. Residues serine 6 and serine 7 are each glycosylated (O-linked (GalNAc...) serine). A sulfotyrosine mark is found at tyrosine 10 and tyrosine 14. 2 cysteine pairs are disulfide-bonded: cysteine 20–cysteine 269 and cysteine 101–cysteine 178. Residues 31–58 (RLLPPLYSLVFIFGFVGNMLVILVLINC) traverse the membrane as a helical segment. Residues 59–68 (KRLKSMTDIY) lie on the Cytoplasmic side of the membrane. Residues 69–89 (LLNLAISDLFFLLTVPFWAHY) traverse the membrane as a helical segment. Residues 90-102 (AAAQWDFGNTMCQ) lie on the Extracellular side of the membrane. Residues 103–124 (LLTGLYFIGFFSGIFFIILLTI) form a helical membrane-spanning segment. At 125–141 (DRYLAIVHAVFALKART) the chain is on the cytoplasmic side. The chain crosses the membrane as a helical span at residues 142–166 (VTFGVVTSVITWVVAVFASLPGIIF). Over 167–198 (TRSQKEGLHYTCSSHFPYSQYQFWKNFQTLKI) the chain is Extracellular. A helical transmembrane segment spans residues 199-218 (VILGLVLPLLVMVICYSGIL). Residues 219–235 (KTLLRCRNEKKRHRAVR) lie on the Cytoplasmic side of the membrane. A helical transmembrane segment spans residues 236–260 (LIFTIMIVYFLFWAPYNIVLLLNTF). Topologically, residues 261–277 (QEFFGLNNCSSSNRLDQ) are extracellular. The chain crosses the membrane as a helical span at residues 278 to 301 (AMQVTETLGMTHCCINPIIYAFVG). Topologically, residues 302–352 (EKFRNYLLVFFQKHIAKHFCKCCSIFQQEAPERASSVYTRSTGEQEISVGL) are cytoplasmic. S-palmitoyl cysteine attachment occurs at residues cysteine 321, cysteine 323, and cysteine 324. 4 positions are modified to phosphoserine; by BARK1: serine 336, serine 337, serine 342, and serine 349.

It belongs to the G-protein coupled receptor 1 family. As to quaternary structure, interacts with PRAF2. Efficient ligand binding to CCL3/MIP-1alpha and CCL4/MIP-1beta requires sulfation, O-glycosylation and sialic acid modifications. Glycosylation on Ser-6 is required for efficient binding of CCL4. Interacts with GRK2. Interacts with ARRB1 and ARRB2. Interacts with CNIH4. Interacts with S100A4; this interaction stimulates T-lymphocyte chemotaxis. Post-translationally, sulfated on at least 2 of the N-terminal tyrosines. Sulfation is required for efficient binding of the chemokines, CCL3 and CCL4. Palmitoylation in the C-terminal is important for cell surface expression. In terms of processing, phosphorylation on serine residues in the C-terminal is stimulated by binding CC chemokines especially by APO-RANTES. Post-translationally, O-glycosylated, but not N-glycosylated. Ser-6 appears to be the major site even if Ser-7 may be also O-glycosylated. Also sialylated glycans present which contribute to chemokine binding. Thr-16 and Ser-17 may also be glycosylated and, if so, with small moieties such as a T-antigen.

It is found in the cell membrane. Functionally, receptor for a number of inflammatory CC-chemokines including CCL3/MIP-1-alpha, CCL4/MIP-1-beta and RANTES and subsequently transduces a signal by increasing the intracellular calcium ion level. May play a role in the control of granulocytic lineage proliferation or differentiation. Participates in T-lymphocyte migration to the infection site by acting as a chemotactic receptor. The protein is C-C chemokine receptor type 5 (CCR5) of Nomascus leucogenys (Northern white-cheeked gibbon).